Reading from the N-terminus, the 323-residue chain is Mediator of RNA polymerase II transcription subunit 4 (323 aa).

Residues 1 to 36 (MLPFKKADSPFKSNPVSRVGSSTRLNQLGNIKSNPT) form a disordered region. Polar residues predominate over residues 11–36 (FKSNPVSRVGSSTRLNQLGNIKSNPT). A coiled-coil region spans residues 79-167 (MVQKVNEYER…VSYRNELKKL (89 aa)). Basic and acidic residues-rich tracts occupy residues 241 to 262 (HELG…KVDH) and 282 to 303 (DEQR…KEEQ). The tract at residues 241–323 (HELGETDKEN…LFDPDDEYSD (83 aa)) is disordered.

Belongs to the Mediator complex subunit 4 family. Component of the Mediator complex.

The protein localises to the nucleus. Its function is as follows. Component of the Mediator complex, a coactivator involved in the regulated transcription of nearly all RNA polymerase II-dependent genes. Mediator functions as a bridge to convey information from gene-specific regulatory proteins to the basal RNA polymerase II transcription machinery. Mediator is recruited to promoters by direct interactions with regulatory proteins and serves as a scaffold for the assembly of a functional preinitiation complex with RNA polymerase II and the general transcription factors. The sequence is that of Mediator of RNA polymerase II transcription subunit 4 (MED4) from Candida albicans (strain SC5314 / ATCC MYA-2876) (Yeast).